The primary structure comprises 548 residues: tRNA (guanine(26)-N(2))-dimethyltransferase (548 aa).

A Trm1 methyltransferase domain is found at 30 to 470 (ASLTEGSAII…APWSFVWDVL (441 aa)). S-adenosyl-L-methionine contacts are provided by arginine 57, arginine 137, aspartate 155, and alanine 186. Cysteine 317, cysteine 320, cysteine 354, and cysteine 357 together coordinate Zn(2+). The interval 523-548 (QMNPTENWGPKSKPGKRTIAEVDSKS) is disordered.

This sequence belongs to the class I-like SAM-binding methyltransferase superfamily. Trm1 family.

It localises to the mitochondrion. It is found in the nucleus. The protein resides in the cytoplasm. It catalyses the reaction guanosine(26) in tRNA + 2 S-adenosyl-L-methionine = N(2)-dimethylguanosine(26) in tRNA + 2 S-adenosyl-L-homocysteine + 2 H(+). Dimethylates a single guanine residue at position 26 of nuclear- and mitochondrial-encoded tRNAs using S-adenosyl-L-methionine as donor of the methyl groups. Also has tRNA strand annealing and dissociation activity independently of its tRNA guanine-dimethyltransferase activity. This chain is tRNA (guanine(26)-N(2))-dimethyltransferase, found in Schizosaccharomyces pombe (strain 972 / ATCC 24843) (Fission yeast).